The chain runs to 351 residues: S-adenosylmethionine:tRNA ribosyltransferase-isomerase (351 aa).

This sequence belongs to the QueA family. As to quaternary structure, monomer.

The protein resides in the cytoplasm. It catalyses the reaction 7-aminomethyl-7-carbaguanosine(34) in tRNA + S-adenosyl-L-methionine = epoxyqueuosine(34) in tRNA + adenine + L-methionine + 2 H(+). It participates in tRNA modification; tRNA-queuosine biosynthesis. Its function is as follows. Transfers and isomerizes the ribose moiety from AdoMet to the 7-aminomethyl group of 7-deazaguanine (preQ1-tRNA) to give epoxyqueuosine (oQ-tRNA). The sequence is that of S-adenosylmethionine:tRNA ribosyltransferase-isomerase from Hahella chejuensis (strain KCTC 2396).